The primary structure comprises 885 residues: MADTTVEKLATEVGKSVERLIEQFSQAGIKKGQADNVSEAEKQQLLDYLKKQHGGDNAPTKMTLQRKTVSTLSVAGNGGQSKDVKVEVRKTRTFVKRDVSDAVLKAEEEAKAKAEAEAKAKAETEAKAKAEAEAKAKVEAEAKAKAEAEAKAKAKAAAEVKVTKDTSPEAEAARIEAERLKAAQEAATKRKQAEEAAKAAEKARLLAEENSKRWAEEERQRLEAERYSDHHITTSKVARAAEDSSDMDEEKRGRRARNKNTAKTKRGGKDARDGREKHMRNRSTAPESMAHGFNKPVAAVNRDVRIGETVTVAELAHLMAVKATEIIKQMMKMGSMVTINQVLDQETAQLVAEEMGHKVVLIRENELEQQVLSERDEEGGVKLEPRAPVVTIMGHVDHGKTSLLDYIRRAKVAAGEAGGITQHIGAYHVETENGMITFLDTPGHAAFTAMRARGAKATDIVVLVVAADDGVMPQTIEAIQHAKAGNVPLIVAVNKMDKPEADIDRVKSELSQHGVMSEDWGGDNMFAFVSAKTGAGVDDLLEGILLQAEVLELKAVRDGMAAGVVIESQLDKGRGPVATILVQEGTLRQGDIVLCGLEYGKIRAMKDENGRSITEAGPSIPVEILGLSGVPSAGDEATVVRDERKAREVALYRQGKFRDVKLARQQKSKLENMFANMTEGEVKELNIVLKADVQGSLEAITDSLMGLSTDEVKVNIIARGVGALTETDATLAAASNAIMVGFNVRADAQARKTIENESVDLRYYSVIYNLIDEVKAAMTGMLSPEFKQQIIGLAEVRDVFKSPKLGAIAGCMVTEGTIKRSAPIRVLRDNVVIFEGELESLRRFKDDVNEVRNGMECGIGVKNYNDVRVGDQIEVFETVEVARTL.

Basic and acidic residues predominate over residues 123-232 (ETEAKAKAEA…EAERYSDHHI (110 aa)). The segment at 123 to 289 (ETEAKAKAEA…RNRSTAPESM (167 aa)) is disordered. The segment covering 253-266 (GRRARNKNTAKTKR) has biased composition (basic residues). The span at 267 to 276 (GGKDARDGRE) shows a compositional bias: basic and acidic residues. Residues 385-554 (PRAPVVTIMG…LLQAEVLELK (170 aa)) enclose the tr-type G domain. A G1 region spans residues 394–401 (GHVDHGKT). Residue 394–401 (GHVDHGKT) coordinates GTP. The interval 419-423 (GITQH) is G2. Residues 440–443 (DTPG) are G3. GTP-binding positions include 440–444 (DTPGH) and 494–497 (NKMD). Residues 494 to 497 (NKMD) form a G4 region. A G5 region spans residues 530-532 (SAK).

The protein belongs to the TRAFAC class translation factor GTPase superfamily. Classic translation factor GTPase family. IF-2 subfamily.

The protein localises to the cytoplasm. In terms of biological role, one of the essential components for the initiation of protein synthesis. Protects formylmethionyl-tRNA from spontaneous hydrolysis and promotes its binding to the 30S ribosomal subunits. Also involved in the hydrolysis of GTP during the formation of the 70S ribosomal complex. The polypeptide is Translation initiation factor IF-2 (Shewanella oneidensis (strain ATCC 700550 / JCM 31522 / CIP 106686 / LMG 19005 / NCIMB 14063 / MR-1)).